The chain runs to 590 residues: Pentatricopeptide repeat-containing protein At1g63070, mitochondrial (590 aa).

The N-terminal 34 residues, 1-34, are a transit peptide targeting the mitochondrion; sequence MMRSVAVIGKKCLHRHTVLLKGNPRTTLCWERSF. PPR repeat units follow at residues 74 to 108, 109 to 143, 144 to 178, 179 to 213, 214 to 248, 249 to 283, 284 to 318, 319 to 353, 355 to 389, 390 to 424, 425 to 459, 460 to 494, 495 to 529, and 530 to 564; these read SIVE…GISH, NLYT…GYGP, SIVT…GYQP, DTVT…GCQP, DLVT…KIEA, DVVI…GIKP, DVFT…NINP, DLVF…KHCF, DVVA…GLVG, NTVT…GVHP, DIMT…DMKL, DIVT…GVKP, NVVT…GPLP, and NSGT…GFAG.

Belongs to the PPR family. P subfamily.

The protein localises to the mitochondrion. This Arabidopsis thaliana (Mouse-ear cress) protein is Pentatricopeptide repeat-containing protein At1g63070, mitochondrial.